The sequence spans 216 residues: Leucyl/phenylalanyl-tRNA--protein transferase (216 aa).

Belongs to the L/F-transferase family.

It localises to the cytoplasm. The enzyme catalyses N-terminal L-lysyl-[protein] + L-leucyl-tRNA(Leu) = N-terminal L-leucyl-L-lysyl-[protein] + tRNA(Leu) + H(+). The catalysed reaction is N-terminal L-arginyl-[protein] + L-leucyl-tRNA(Leu) = N-terminal L-leucyl-L-arginyl-[protein] + tRNA(Leu) + H(+). It catalyses the reaction L-phenylalanyl-tRNA(Phe) + an N-terminal L-alpha-aminoacyl-[protein] = an N-terminal L-phenylalanyl-L-alpha-aminoacyl-[protein] + tRNA(Phe). Functions in the N-end rule pathway of protein degradation where it conjugates Leu, Phe and, less efficiently, Met from aminoacyl-tRNAs to the N-termini of proteins containing an N-terminal arginine or lysine. In Maricaulis maris (strain MCS10) (Caulobacter maris), this protein is Leucyl/phenylalanyl-tRNA--protein transferase.